The following is a 123-amino-acid chain: Methicillin resistance regulatory protein MecI (123 aa).

A DNA-binding region (H-T-H motif) is located at residues 7-71 (EISSAEWEFM…KDNKIFQYYS (65 aa)). The tract at residues 74–123 (EESDIKYKTSKNFINKVYKGGFNSLVLNFVEKEDLSQDEIEELRNILNKK) is important for dimerization.

It belongs to the BlaI transcriptional regulatory family. As to quaternary structure, monomer and homodimer. Post-translationally, upon exposure to beta-lactams, proteolytic cleavage at a single site impairs dimerization and abolishes repressor activity.

The protein resides in the cytoplasm. Its function is as follows. Transcriptional repressor that constitutively blocks the transcription of the gene for the penicillin-binding protein MecA. Binds DNA as a dimer. The sequence is that of Methicillin resistance regulatory protein MecI (mecI) from Staphylococcus aureus (strain Mu50 / ATCC 700699).